Consider the following 96-residue polypeptide: Cytoplasmic envelopment protein 3 (96 aa).

Gly-2 carries N-myristoyl glycine; by host lipidation. An asp/Glu-rich (acidic) region spans residues 37-43 (DIESEEE). A Phosphoserine modification is found at Ser-40. The disordered stretch occupies residues 50–96 (PDVRVVTRAPGPQYRRPSDPPSRHTRRRDPDVARPPATLTPPLSDSE). Residues 65-81 (RPSDPPSRHTRRRDPDV) show a composition bias toward basic and acidic residues.

The protein belongs to the herpesviridae cytoplasmic envelopment protein 3 family. Interacts with cytoplasmic envelopment protein 2; this interaction is essential for the proper localization of each protein to the assembly complex and thus for the production of infectious virus. Interacts with gE (via C-terminus). Interacts with gD (via C-terminus). Interacts with UL56. In terms of processing, myristoylation and palmitoylation (probably on one or more of the nearby cysteines at the N-terminus) enable membrane-binding and Golgi apparatus-specific targeting and are essential for efficient packaging. Phosphorylated. Phosphorylation does not seem to be required for recycling to the host Golgi apparatus. Packaging is selective for underphosphorylated forms.

The protein resides in the virion tegument. The protein localises to the virion membrane. Its subcellular location is the host cell membrane. It is found in the host Golgi apparatus membrane. Functionally, plays an important role in the cytoplasmic envelopment of tegument proteins and capsids during the assembly and egress processes. Also participates in viral entry at the fusion step probably by regulating the core fusion machinery. This chain is Cytoplasmic envelopment protein 3, found in Homo sapiens (Human).